Reading from the N-terminus, the 859-residue chain is DNA mismatch repair protein MutS (859 aa).

615–622 (GPNMGGKS) is an ATP binding site.

This sequence belongs to the DNA mismatch repair MutS family.

In terms of biological role, this protein is involved in the repair of mismatches in DNA. It is possible that it carries out the mismatch recognition step. This protein has a weak ATPase activity. This is DNA mismatch repair protein MutS from Chromohalobacter salexigens (strain ATCC BAA-138 / DSM 3043 / CIP 106854 / NCIMB 13768 / 1H11).